The following is a 391-amino-acid chain: Polyketide synthase 5 (391 aa).

Residue Cys-164 is part of the active site.

The protein belongs to the thiolase-like superfamily. Chalcone/stilbene synthases family. As to quaternary structure, homodimer. Expressed in fruits.

The enzyme catalyses (E)-4-coumaroyl-CoA + 3 malonyl-CoA + 3 H(+) = 2',4,4',6'-tetrahydroxychalcone + 3 CO2 + 4 CoA. It participates in secondary metabolite biosynthesis; flavonoid biosynthesis. Functionally, polyketide synthase producing naringenin chalcone. Can use p-coumaryl-CoA as substrate. The sequence is that of Polyketide synthase 5 (PKS5) from Rubus idaeus (Raspberry).